The sequence spans 439 residues: Tol-Pal system protein TolB (439 aa).

The N-terminal stretch at 1–22 (MKKPLRWLAALTVLLLPLSALA) is a signal peptide.

Belongs to the TolB family. As to quaternary structure, the Tol-Pal system is composed of five core proteins: the inner membrane proteins TolA, TolQ and TolR, the periplasmic protein TolB and the outer membrane protein Pal. They form a network linking the inner and outer membranes and the peptidoglycan layer.

It localises to the periplasm. Its function is as follows. Part of the Tol-Pal system, which plays a role in outer membrane invagination during cell division and is important for maintaining outer membrane integrity. This chain is Tol-Pal system protein TolB, found in Xanthomonas oryzae pv. oryzae (strain PXO99A).